Here is a 148-residue protein sequence, read N- to C-terminus: Snaclec 6 (148 aa).

An N-terminal signal peptide occupies residues 1-23; it reads MGRFIFVSFGLLVMFLSLSGTEA. Cystine bridges form between C27-C38, C55-C144, and C121-C136. The 112-residue stretch at 34-145 folds into the C-type lectin domain; that stretch reads YDQNCYKAFE…CSGTHNFVCK (112 aa). N-linked (GlcNAc...) asparagine glycosylation occurs at N130.

The protein belongs to the snaclec family. Heterodimer; disulfide-linked. In terms of tissue distribution, expressed by the venom gland.

It localises to the secreted. Functionally, interferes with one step of hemostasis (modulation of platelet aggregation, or coagulation cascade, for example). This is Snaclec 6 from Bitis arietans (African puff adder).